Consider the following 496-residue polypeptide: Probable 26S proteasome non-ATPase regulatory subunit 3 (496 aa).

The PCI domain maps to 249-428 (ARFLYYLGRI…GYMRSKESTD (180 aa)). Positions 458-480 (RYPPKSYGKELESAEERREREQQ) are disordered. Basic and acidic residues predominate over residues 464–480 (YGKELESAEERREREQQ).

The protein belongs to the proteasome subunit S3 family. In terms of assembly, the 26S proteasome is composed of a core protease, known as the 20S proteasome, capped at one or both ends by the 19S regulatory complex (RC). The RC is composed of at least 18 different subunits in two subcomplexes, the base and the lid, which form the portions proximal and distal to the 20S proteolytic core, respectively.

Acts as a regulatory subunit of the 26 proteasome which is involved in the ATP-dependent degradation of ubiquitinated proteins. The chain is Probable 26S proteasome non-ATPase regulatory subunit 3 (Dox-A2) from Anopheles gambiae (African malaria mosquito).